Here is a 1388-residue protein sequence, read N- to C-terminus: DNA-directed RNA polymerase subunit beta' (1388 aa).

Residues Cys-70, Cys-72, Cys-85, and Cys-88 each contribute to the Zn(2+) site. Positions 461, 463, and 465 each coordinate Mg(2+). Cys-808, Cys-882, Cys-889, and Cys-892 together coordinate Zn(2+).

The protein belongs to the RNA polymerase beta' chain family. As to quaternary structure, the RNAP catalytic core consists of 2 alpha, 1 beta, 1 beta' and 1 omega subunit. When a sigma factor is associated with the core the holoenzyme is formed, which can initiate transcription. Mg(2+) is required as a cofactor. Requires Zn(2+) as cofactor.

The catalysed reaction is RNA(n) + a ribonucleoside 5'-triphosphate = RNA(n+1) + diphosphate. Functionally, DNA-dependent RNA polymerase catalyzes the transcription of DNA into RNA using the four ribonucleoside triphosphates as substrates. The chain is DNA-directed RNA polymerase subunit beta' from Acidiphilium cryptum (strain JF-5).